Here is a 172-residue protein sequence, read N- to C-terminus: MFNKQEFYTKEDLLNSSKGNLFGKKGPVLPAPNMLMIDRITKMTTNGGNYNKGFVSAELDIRSDMWFFSCHFINDPVMPGCLGLDAMWQLVGFYLGWIGGKGRGRALGVKEVKFTGQILPTAKTVTYLIHFRKIITRTLIMGMADGEVMCDNKIIYTAADLKVGLFTNISTF.

His-71 is a catalytic residue.

Belongs to the thioester dehydratase family. FabA subfamily. Homodimer.

The protein resides in the cytoplasm. The enzyme catalyses a (3R)-hydroxyacyl-[ACP] = a (2E)-enoyl-[ACP] + H2O. It carries out the reaction (3R)-hydroxydecanoyl-[ACP] = (2E)-decenoyl-[ACP] + H2O. It catalyses the reaction (2E)-decenoyl-[ACP] = (3Z)-decenoyl-[ACP]. It functions in the pathway lipid metabolism; fatty acid biosynthesis. Functionally, necessary for the introduction of cis unsaturation into fatty acids. Catalyzes the dehydration of (3R)-3-hydroxydecanoyl-ACP to E-(2)-decenoyl-ACP and then its isomerization to Z-(3)-decenoyl-ACP. Can catalyze the dehydratase reaction for beta-hydroxyacyl-ACPs with saturated chain lengths up to 16:0, being most active on intermediate chain length. The sequence is that of 3-hydroxydecanoyl-[acyl-carrier-protein] dehydratase from Blochmanniella floridana.